A 176-amino-acid chain; its full sequence is Transcriptional repressor NrdR (176 aa).

The segment at 3-34 (CPYCGSLETQVKDSRPTDDASAIRRRRVCPDC) is a zinc-finger region. Residues 49–139 (LTVLKKSGRR…VYRNFREARD (91 aa)) form the ATP-cone domain. The tract at residues 147-176 (LDGAAQPEAPSKDDGGTDEPPAKTRAPTRA) is disordered.

The protein belongs to the NrdR family. Zn(2+) is required as a cofactor.

Its function is as follows. Negatively regulates transcription of bacterial ribonucleotide reductase nrd genes and operons by binding to NrdR-boxes. In Methylocella silvestris (strain DSM 15510 / CIP 108128 / LMG 27833 / NCIMB 13906 / BL2), this protein is Transcriptional repressor NrdR.